Here is a 652-residue protein sequence, read N- to C-terminus: MAAATSSSPISLTAKPSSKSPLPISRFSLPFSLTPQKPSSRLHRPLAISAVLNSPVNVAPEKTDKIKTFISRYAPDEPRKGADILVEALERQGVETVFAYPGGASMEIHQALTRSSTIRNVLPRHEQGGVFAAEGYARSSGKPGICIATSGPGATNLVSGLADAMLDSVPLVAITGQVPRRMIGTDAFQETPIVEVTRSITKHNYLVMDVDDIPRIVQEAFFLATSGRPGPVLVDVPKDIQQQLAIPNWDQPMRLPGYMSRLPQPPEVSQLGQIVRLISESKRPVLYVGGGSLNSSEELGRFVELTGIPVASTLMGLGSYPCNDELSLQMLGMHGTVYANYAVEHSDLLLAFGVRFDDRVTGKLEAFASRAKIVHIDIDSAEIGKNKTPHVSVCGDVKLALQGMNKVLENRAEELKLDFGVWRSELSEQKQKFPLSFKTFGEAIPPQYAIQVLDELTQGKAIISTGVGQHQMWAAQFYKYRKPRQWLSSSGLGAMGFGLPAAIGASVANPDAIVVDIDGDGSFIMNVQELATIRVENLPVKILLLNNQHLGMVMQWEDRFYKANRAHTYLGDPARENEIFPNMLQFAGACGIPAARVTKKEELREAIQTMLDTPGPYLLDVICPHQEHVLPMIPSGGTFKDVITEGDGRTKY.

The segment covering 1-20 (MAAATSSSPISLTAKPSSKS) has biased composition (polar residues). Residues 1–23 (MAAATSSSPISLTAKPSSKSPLP) are disordered. The N-terminal 69 residues, 1-69 (MAAATSSSPI…PEKTDKIKTF (69 aa)), are a transit peptide targeting the chloroplast. Glutamate 126 contacts thiamine diphosphate. FAD-binding positions include arginine 228, 334–355 (HGTV…FGVR), and 377–396 (DIDS…VCGD). The interval 469–549 (QHQMWAAQFY…VKILLLNNQH (81 aa)) is thiamine pyrophosphate binding. The Mg(2+) site is built by aspartate 520 and asparagine 547.

This sequence belongs to the TPP enzyme family. Requires Mg(2+) as cofactor. Thiamine diphosphate is required as a cofactor.

Its subcellular location is the plastid. The protein resides in the chloroplast. It carries out the reaction 2 pyruvate + H(+) = (2S)-2-acetolactate + CO2. It participates in amino-acid biosynthesis; L-isoleucine biosynthesis; L-isoleucine from 2-oxobutanoate: step 1/4. It functions in the pathway amino-acid biosynthesis; L-valine biosynthesis; L-valine from pyruvate: step 1/4. This Brassica napus (Rape) protein is Acetolactate synthase 3, chloroplastic.